The sequence spans 146 residues: Large ribosomal subunit protein uL15 (146 aa).

Residues methionine 1 to arginine 13 are compositionally biased toward basic and acidic residues. Positions methionine 1–glutamate 51 are disordered. Composition is skewed to gly residues over residues arginine 21–alanine 31 and serine 42–glutamate 51.

This sequence belongs to the universal ribosomal protein uL15 family. In terms of assembly, part of the 50S ribosomal subunit.

Functionally, binds to the 23S rRNA. This chain is Large ribosomal subunit protein uL15, found in Bacillus mycoides (strain KBAB4) (Bacillus weihenstephanensis).